The following is a 238-amino-acid chain: DNA repair protein RecO (238 aa).

This sequence belongs to the RecO family.

In terms of biological role, involved in DNA repair and RecF pathway recombination. This chain is DNA repair protein RecO, found in Anaplasma marginale (strain St. Maries).